Reading from the N-terminus, the 648-residue chain is RAF proto-oncogene serine/threonine-protein kinase (648 aa).

Position 29 is a phosphoserine; by MAPK1 (Ser-29). Residue Ser-43 is modified to Phosphoserine; by PKA and MAPK1. The 76-residue stretch at 56 to 131 folds into the RBD domain; sequence NTIRVFLPNK…IGEELQVDFL (76 aa). A Phorbol-ester/DAG-type zinc finger spans residues 138–184; it reads THNFARKTFLKLAFCDICQKFLLNGFRCQTCGYKFHEHCSTKVPTMC. The Zn(2+) site is built by His-139, Cys-152, Cys-155, Cys-165, Cys-168, His-173, Cys-176, and Cys-184. Positions 205 to 265 are disordered; that stretch reads GVPAPPSFPM…RSTSTPNVHM (61 aa). Ser-233 bears the Phosphoserine; by PKA mark. A compositionally biased stretch (polar residues) spans 239-265; sequence TFNTSSPSSEGSLSQRQRSTSTPNVHM. Ser-252 is modified (phosphoserine). Ser-259 bears the Phosphoserine; by PKA, PKC and PKB/AKT1 mark. A Phosphothreonine; by autocatalysis modification is found at Thr-268. A Phosphothreonine; by PKA modification is found at Thr-269. The segment at 281–335 is disordered; it reads IRSHSESASPSALSSSPNNLSPTGWSQPKTPVPAQRERAPGSGTQEKNKIRPRGQ. The span at 286–301 shows a compositional bias: low complexity; sequence ESASPSALSSSPNNLS. 3 positions are modified to phosphoserine; by MAPK1: Ser-289, Ser-296, and Ser-301. Positions 331–349 are interaction with PEBP1/RKIP; the sequence is RPRGQRDSSYYWEIEASEV. Residue Ser-338 is modified to Phosphoserine; by PAK1, PAK2, PAK3 and PAK5. Position 339 is a phosphoserine; by PAK1, PAK2 and PAK3 (Ser-339). Phosphotyrosine; by SRC occurs at positions 340 and 341. Positions 349–609 constitute a Protein kinase domain; that stretch reads VMLSTRIGSG…PQILSSIELL (261 aa). Residues 355 to 363 and Lys-375 contribute to the ATP site; that span reads IGSGSFGTV. The active-site Proton acceptor is the Asp-468. Residue Ser-471 is modified to Phosphoserine. Residue Thr-491 is modified to Phosphothreonine. Ser-494 is subject to Phosphoserine. 2 positions are modified to phosphoserine; by PKC: Ser-497 and Ser-499. Arg-563 carries the symmetric dimethylarginine; by PRMT5 modification. At Ser-621 the chain carries Phosphoserine. The residue at position 642 (Ser-642) is a Phosphoserine; by MAPK1.

It belongs to the protein kinase superfamily. TKL Ser/Thr protein kinase family. RAF subfamily. As to quaternary structure, monomer. Homodimer. Heterodimerizes with BRAF and this heterodimer possesses a highly increased kinase activity compared to the respective homodimers or monomers. Heterodimerization is mitogen-regulated and enhanced by 14-3-3 proteins. MAPK1/ERK2 activation can induce a negative feedback that promotes the dissociation of the heterodimer. Forms a multiprotein complex with Ras (M-Ras/MRAS), SHOC2 and protein phosphatase 1 (PPP1CA, PPP1CB and PPP1CC). Interacts with LZTR1. Interacts with Ras proteins; the interaction is antagonized by RIN1. Weakly interacts with RIT1. Interacts (via N-terminus) with RGS14 (via RBD domains); the interaction mediates the formation of a ternary complex with BRAF, a ternary complex inhibited by GNAI1. Probably forms a complex composed of chaperones HSP90 and HSP70, co-chaperones CDC37, PPP5C, TSC1 and client protein TSC2, CDK4, AKT, RAF1 and NR3C1; this complex does not contain co-chaperones STIP1/HOP and PTGES3/p23. Interacts with STK3/MST2; the interaction inhibits its pro-apoptotic activity. Interacts (when phosphorylated at Ser-259) with YWHAZ (unphosphorylated at 'Thr-232'). Interacts with MAP2K1/MEK1 and MAP2K2/MEK2. Interacts with MAP3K5/ASF1 (via N-terminus) and this interaction inhibits the proapoptotic function of MAP3K5/ASK1. Interacts with PAK1 (via kinase domain). The Ser-338 and Ser-339 phosphorylated form (by PAK1) interacts with BCL2. Interacts with PEBP1/RKIP and this interaction is enhanced if RAF1 is phosphorylated on residues Ser-338, Ser-339, Tyr-340 and Tyr-341. Interacts with ADCY2, ADCY5, ADCY6, DGKH, RCAN1/DSCR1, PPP1R12A, PKB/AKT1, SPRY2, SPRY4, CNKSR1/CNK1, KSR2 and PHB/prohibitin. The phosphorylated form interacts with PIN1. Interacts with PPP2CA, PPP2R1B and ROCK2. In its active form, interacts with PRMT5. Interacts with FAM83B; displaces 14-3-3 proteins from RAF1 and activates RAF1. Interacts with PDE8A; the interaction promotes RAF1 activity. Interacts with MFHAS1. Interacts with GLS. Interacts with NEK10 and MAP2K1; the interaction is direct with NEK10 and required for ERK1/2-signaling pathway activation in response to UV irradiation. Requires Zn(2+) as cofactor. Phosphorylation at Thr-269, Ser-338, Tyr-341, Thr-491 and Ser-494 results in its activation. Phosphorylation at Ser-29, Ser-43, Ser-289, Ser-296, Ser-301 and Ser-642 by MAPK1/ERK2 results in its inactivation. Phosphorylation at Ser-259 induces the interaction with YWHAZ and inactivates kinase activity. Dephosphorylation of Ser-259 by the SHOC2-MRAS-PP1c (SMP) complex consisting of SHOC2, GTP-bound M-Ras/MRAS and the catalytic subunit of protein phosphatase 1 (PPP1CA, PPP1CB or PPP1CC); this relieves inactivation and stimulates kinase activity. Phosphorylation at Ser-338 by PAK1 and PAK5 and Ser-339 by PAK1 is required for its mitochondrial localization. Phosphorylation at Ser-621 in response to growth factor treatment stabilizes the protein, possibly by preventing proteasomal degradation. Phosphorylation at Ser-289, Ser-296, Ser-301, Ser-338 and Ser-621 are somehow linked to the methylation potential of cells. Treatment of cells with HGF in the presence of the methylation inhibitor 5'-methylthioadenosine (MTA) results in increased phosphorylation at Ser-338 and Ser-621 and decreased phosphorylation at Ser-296, Ser-301 and Ser-338. Dephosphorylation at Ser-338 by PPP5C results in a decreased of activity. Post-translationally, methylated at Arg-563 in response to EGF treatment. This modification leads to destabilization of the protein, possibly through proteasomal degradation. In terms of tissue distribution, present in all tissues tested: testis, ovary, small intestine, colon, peripheral blood leukocytes, fetal liver, bone marrow, thymus, lymph node and spleen, and the cell lines melanoma G-361, lung carcinoma A-549, colorectal adenocarcinoma SW480, Burkitt's lymphoma Raji and lymphoblastic leukemia MOLT-4. In skeletal muscle, isoform 1 is more abundant than isoform 2.

It localises to the cytoplasm. Its subcellular location is the cell membrane. It is found in the mitochondrion. The protein localises to the nucleus. The catalysed reaction is L-seryl-[protein] + ATP = O-phospho-L-seryl-[protein] + ADP + H(+). It catalyses the reaction L-threonyl-[protein] + ATP = O-phospho-L-threonyl-[protein] + ADP + H(+). With respect to regulation, regulation is a highly complex process involving membrane recruitment, protein-protein interactions, dimerization, and phosphorylation/dephosphorylation events. Ras-GTP recruits RAF1 to the membrane, thereby promoting its activation. The inactive conformation of RAF1 is maintained by autoinhibitory interactions occurring between the N-terminal regulatory and the C-terminal catalytic domains and by the binding of a 14-3-3 protein that contacts two phosphorylation sites, Ser-259 and Ser-621. Upon mitogenic stimulation, Ras and PPP2R1A cooperate to release autoinhibition and the subsequent phosphorylation of activating sites: Ser-338, Tyr-341, Thr-491, and Ser-494, yields a fully active kinase. Through a negative feedback mechanism involving MAPK1/ERK2, RAF1 is phosphorylated on Ser-29, Ser-43, Ser-289, Ser-296, Ser-301 and Ser-642 by MAPK1/ERK2, which yields an inactive, desensitized kinase. The signaling-competent conformation of RAF1 is finally re-established by the coordinated action of PIN1, a prolyl isomerase that converts pSer and pThr residues from the cis to the trans conformation, which is preferentially recognized and dephosphorylated by PPP2R1A. Activated by homodimerization and heterodimerization (with BRAF). Also regulated through association with other proteins such as KSR2, CNKSR1/CNK1, PEBP1/RKIP, PHB/prohibitin and SPRY4. PEBP1/RKIP acts by dissociating RAF1 from its substrates MAP2K1/MEK1 and MAP2K2/MEK2. PHB/prohibitin facilitates the displacement of 14-3-3 from RAF1 by activated Ras, thereby promoting cell membrane localization and phosphorylation of RAF1 at the activating Ser-338. SPRY4 inhibits Ras-independent, but not Ras-dependent, activation of RAF1. CNKSR1/CNK1 regulates Src-mediated RAF1 activation. Its function is as follows. Serine/threonine-protein kinase that acts as a regulatory link between the membrane-associated Ras GTPases and the MAPK/ERK cascade, and this critical regulatory link functions as a switch determining cell fate decisions including proliferation, differentiation, apoptosis, survival and oncogenic transformation. RAF1 activation initiates a mitogen-activated protein kinase (MAPK) cascade that comprises a sequential phosphorylation of the dual-specific MAPK kinases (MAP2K1/MEK1 and MAP2K2/MEK2) and the extracellular signal-regulated kinases (MAPK3/ERK1 and MAPK1/ERK2). The phosphorylated form of RAF1 (on residues Ser-338 and Ser-339, by PAK1) phosphorylates BAD/Bcl2-antagonist of cell death at 'Ser-75'. Phosphorylates adenylyl cyclases: ADCY2, ADCY5 and ADCY6, resulting in their activation. Phosphorylates PPP1R12A resulting in inhibition of the phosphatase activity. Phosphorylates TNNT2/cardiac muscle troponin T. Can promote NF-kB activation and inhibit signal transducers involved in motility (ROCK2), apoptosis (MAP3K5/ASK1 and STK3/MST2), proliferation and angiogenesis (RB1). Can protect cells from apoptosis also by translocating to the mitochondria where it binds BCL2 and displaces BAD/Bcl2-antagonist of cell death. Plays a role in the oncogenic transformation of epithelial cells via repression of the TJ protein, occludin (OCLN) by inducing the up-regulation of a transcriptional repressor SNAI2/SLUG, which induces down-regulation of OCLN. Restricts caspase activation in response to selected stimuli, notably Fas stimulation, pathogen-mediated macrophage apoptosis, and erythroid differentiation. Regulates Rho signaling and migration, and is required for normal wound healing. The sequence is that of RAF proto-oncogene serine/threonine-protein kinase (Raf1) from Mus musculus (Mouse).